The chain runs to 106 residues: Iron-sulfur cluster assembly protein CyaY (106 aa).

The protein belongs to the frataxin family.

In terms of biological role, involved in iron-sulfur (Fe-S) cluster assembly. May act as a regulator of Fe-S biogenesis. The chain is Iron-sulfur cluster assembly protein CyaY from Salmonella schwarzengrund (strain CVM19633).